We begin with the raw amino-acid sequence, 305 residues long: tRNA pseudouridine synthase B (305 aa).

Residue aspartate 39 is the Nucleophile of the active site.

It belongs to the pseudouridine synthase TruB family. Type 1 subfamily.

It carries out the reaction uridine(55) in tRNA = pseudouridine(55) in tRNA. In terms of biological role, responsible for synthesis of pseudouridine from uracil-55 in the psi GC loop of transfer RNAs. In Staphylococcus aureus (strain Newman), this protein is tRNA pseudouridine synthase B.